The chain runs to 265 residues: Ribosomal RNA small subunit methyltransferase A (265 aa).

The S-adenosyl-L-methionine site is built by histidine 17, leucine 19, glycine 44, glutamate 65, aspartate 90, and asparagine 112.

It belongs to the class I-like SAM-binding methyltransferase superfamily. rRNA adenine N(6)-methyltransferase family. RsmA subfamily.

It is found in the cytoplasm. The enzyme catalyses adenosine(1518)/adenosine(1519) in 16S rRNA + 4 S-adenosyl-L-methionine = N(6)-dimethyladenosine(1518)/N(6)-dimethyladenosine(1519) in 16S rRNA + 4 S-adenosyl-L-homocysteine + 4 H(+). In terms of biological role, specifically dimethylates two adjacent adenosines (A1518 and A1519) in the loop of a conserved hairpin near the 3'-end of 16S rRNA in the 30S particle. May play a critical role in biogenesis of 30S subunits. The protein is Ribosomal RNA small subunit methyltransferase A of Xylella fastidiosa (strain 9a5c).